Here is a 274-residue protein sequence, read N- to C-terminus: MLRGGSMTAELGVGFALRAVNERVQQSVARRPRDLPAIQPRLVAVSKTKPADMVIEAYGHGQRTFGENYVQELLEKASNPKILSSCPEIKWHFIGHLQKQNVNKLMAVPNLSMLETVDSVKLADKVNSSWQKKGPTEPLKVMVQINTSGEDSKHGLLPSETIAVVEHIKASCPSLEFVGLMTIGSFGHDLSQGPNPDFQRLLTLRRELCEKLGIPVEQVELSMGMSMDFQHAIEVGSTNVRIGSTIFGERDYSKKPALDKTADAKASVPLVQGH.

Ser6 carries the post-translational modification Phosphoserine. The residue at position 47 (Lys47) is an N6-(pyridoxal phosphate)lysine. Tyr69 is subject to Phosphotyrosine. Lys125 carries the N6-succinyllysine modification. Ser226 and Ser244 each carry phosphoserine.

Belongs to the pyridoxal phosphate-binding protein YggS/PROSC family.

Pyridoxal 5'-phosphate (PLP)-binding protein, which may be involved in intracellular homeostatic regulation of pyridoxal 5'-phosphate (PLP), the active form of vitamin B6. In Mus musculus (Mouse), this protein is Pyridoxal phosphate homeostasis protein.